Reading from the N-terminus, the 206-residue chain is Endoplasmic reticulum transmembrane protein YET-like (206 aa).

Residues 1–2 (ME) are Lumenal-facing. A helical transmembrane segment spans residues 3 to 23 (FLMTLVFLVLLVEIVFCTFFM). Over 24-46 (LPVSMHLRKNVYNKLDKLFGGQN) the chain is Cytoplasmic. The chain crosses the membrane as a helical span at residues 47-67 (AKIFLKVLALLVIIVFCDSIV). Residues 68-101 (NSYNINKKLHTPELTGAKFDRQNEYTRMFRYQRN) lie on the Lumenal side of the membrane. A helical transmembrane segment spans residues 102 to 122 (SYICGFCLYLFFLIYRSQGII). The Cytoplasmic segment spans residues 123 to 206 (SQLSNVEASK…KKPKTQKKDD (84 aa)). Positions 140–198 (KNNLNTVETLLSENEKLKTEIKDLKKMEKEHKAMKSQAENTTKEYLKLQEEYNQLLGKK) form a coiled coil. The Di-lysine motif motif lies at 203-206 (KKDD).

The protein belongs to the BCAP29/BCAP31 family.

The protein resides in the endoplasmic reticulum membrane. May play a role in anterograde transport of membrane proteins from the endoplasmic reticulum to the Golgi. The polypeptide is Endoplasmic reticulum transmembrane protein YET-like (Dictyostelium discoideum (Social amoeba)).